A 162-amino-acid polypeptide reads, in one-letter code: Solute carrier family 2, facilitated glucose transporter member 4 (162 aa).

Over 1–13 the chain is Extracellular; that stretch reads TSIFETAGVGQPA. The chain crosses the membrane as a helical span at residues 14–34; the sequence is YATIGAGVVNTVFTLVSVFLV. Residue Asn23 participates in D-glucose binding. Over 35-43 the chain is Cytoplasmic; it reads ERAGRRTLH. The helical transmembrane segment at 44–64 threads the bilayer; that stretch reads LLGLAGMCGCAILMTIALLLL. Topologically, residues 65-75 are extracellular; it reads ERLPAMSYVSI. The chain crosses the membrane as a helical span at residues 76 to 96; that stretch reads VAIFGFVAFFEIGPGPIPWFI. Positions 86 and 94 each coordinate D-glucose. Residues 97 to 107 are Cytoplasmic-facing; sequence VAELFSQGPRP. The helical transmembrane segment at 108–128 threads the bilayer; the sequence is AAMAVAGFCNWTSNFIIGMGF. Topologically, residues 129–135 are extracellular; sequence QYIAXAM. The helical transmembrane segment at 136-156 threads the bilayer; the sequence is GPYVFLLFAVLLLAFFIFTFL. The Cytoplasmic segment spans residues 157–162; the sequence is KVPETR.

Belongs to the major facilitator superfamily. Sugar transporter (TC 2.A.1.1) family. Glucose transporter subfamily. As to quaternary structure, binds to DAXX. Interacts via its N-terminus with SRFBP1. Interacts with NDUFA9. Interacts with TRARG1; the interaction is required for proper SLC2A4 recycling after insulin stimulation. Post-translationally, sumoylated. In terms of processing, palmitoylated. Palmitoylation by ZDHHC7 controls the insulin-dependent translocation of GLUT4 to the plasma membrane.

It localises to the cell membrane. The protein resides in the endomembrane system. It is found in the cytoplasm. Its subcellular location is the perinuclear region. It carries out the reaction D-glucose(out) = D-glucose(in). Its function is as follows. Insulin-regulated facilitative glucose transporter, which plays a key role in removal of glucose from circulation. Response to insulin is regulated by its intracellular localization: in the absence of insulin, it is efficiently retained intracellularly within storage compartments in muscle and fat cells. Upon insulin stimulation, translocates from these compartments to the cell surface where it transports glucose from the extracellular milieu into the cell. The polypeptide is Solute carrier family 2, facilitated glucose transporter member 4 (Canis lupus familiaris (Dog)).